The following is a 198-amino-acid chain: Na(+)-translocating NADH-quinone reductase subunit E (198 aa).

Transmembrane regions (helical) follow at residues 11-31, 39-59, 77-97, 110-130, 140-160, and 176-196; these read SIFIENMALSFFLGMCTFLAV, FGLGVAVVVVLTIAVPVNNLV, FLNFITFIGVIAALVQILEMI, GIFLPLITVNCAIFGGVSFMV, VVYGFGAGVGWMLAIVALAGI, and LGITFITVGLMALGFMSFSGV.

Belongs to the NqrDE/RnfAE family. As to quaternary structure, composed of six subunits; NqrA, NqrB, NqrC, NqrD, NqrE and NqrF.

It is found in the cell inner membrane. It catalyses the reaction a ubiquinone + n Na(+)(in) + NADH + H(+) = a ubiquinol + n Na(+)(out) + NAD(+). NQR complex catalyzes the reduction of ubiquinone-1 to ubiquinol by two successive reactions, coupled with the transport of Na(+) ions from the cytoplasm to the periplasm. NqrA to NqrE are probably involved in the second step, the conversion of ubisemiquinone to ubiquinol. This chain is Na(+)-translocating NADH-quinone reductase subunit E, found in Vibrio vulnificus (strain CMCP6).